Reading from the N-terminus, the 459-residue chain is Phosphomethylpyrimidine synthase (459 aa).

Substrate-binding positions include asparagine 81, methionine 110, tyrosine 140, histidine 176, 196–198 (SRG), 237–240 (DSLR), and glutamate 276. Histidine 280 provides a ligand contact to Zn(2+). Tyrosine 303 serves as a coordination point for substrate. Histidine 344 is a Zn(2+) binding site. The [4Fe-4S] cluster site is built by cysteine 424, cysteine 427, and cysteine 432.

It belongs to the ThiC family. Requires [4Fe-4S] cluster as cofactor.

The enzyme catalyses 5-amino-1-(5-phospho-beta-D-ribosyl)imidazole + S-adenosyl-L-methionine = 4-amino-2-methyl-5-(phosphooxymethyl)pyrimidine + CO + 5'-deoxyadenosine + formate + L-methionine + 3 H(+). Its pathway is cofactor biosynthesis; thiamine diphosphate biosynthesis. Catalyzes the synthesis of the hydroxymethylpyrimidine phosphate (HMP-P) moiety of thiamine from aminoimidazole ribotide (AIR) in a radical S-adenosyl-L-methionine (SAM)-dependent reaction. The chain is Phosphomethylpyrimidine synthase from Gloeobacter violaceus (strain ATCC 29082 / PCC 7421).